A 109-amino-acid chain; its full sequence is Flagellar hook-basal body complex protein FliE 2 (109 aa).

The protein belongs to the FliE family.

Its subcellular location is the bacterial flagellum basal body. This is Flagellar hook-basal body complex protein FliE 2 (fliE2) from Bradyrhizobium diazoefficiens (strain JCM 10833 / BCRC 13528 / IAM 13628 / NBRC 14792 / USDA 110).